The chain runs to 329 residues: ATP-dependent (S)-NAD(P)H-hydrate dehydratase (329 aa).

Residues 35–326 enclose the YjeF C-terminal domain; the sequence is TLQLVRNIIP…AEVGAAFSKL (292 aa). Tyr-67 carries the phosphotyrosine modification. (6S)-NADPHX is bound by residues Gly-135 and 188-194; that span reads NHMEFSR. N-linked (GlcNAc...) asparagine glycosylation is found at Asn-207 and Asn-222. ATP contacts are provided by residues 228–232 and 247–256; these read KGERD and GSSRRCGGQG. Position 257 (Asp-257) interacts with (6S)-NADPHX. An N-linked (GlcNAc...) asparagine glycan is attached at Asn-279.

Belongs to the NnrD/CARKD family. The cofactor is Mg(2+).

The protein resides in the mitochondrion. The catalysed reaction is (6S)-NADHX + ATP = ADP + phosphate + NADH + H(+). The enzyme catalyses (6S)-NADPHX + ATP = ADP + phosphate + NADPH + H(+). Its function is as follows. Catalyzes the dehydration of the S-form of NAD(P)HX at the expense of ATP, which is converted to ADP. Together with NAD(P)HX epimerase, which catalyzes the epimerization of the S- and R-forms, the enzyme allows the repair of both epimers of NAD(P)HX, a damaged form of NAD(P)H that is a result of enzymatic or heat-dependent hydration. The sequence is that of ATP-dependent (S)-NAD(P)H-hydrate dehydratase from Pongo abelii (Sumatran orangutan).